A 986-amino-acid polypeptide reads, in one-letter code: Bifunctional glutamine synthetase adenylyltransferase/adenylyl-removing enzyme (986 aa).

The interval 1-482 is adenylyl removase; the sequence is MVTTVISNVK…RYGRLFAGEE (482 aa). An adenylyl transferase region spans residues 486–986; sequence SRFGSLVFTG…RAAYEAVVKG (501 aa).

It belongs to the GlnE family. Mg(2+) is required as a cofactor.

It catalyses the reaction [glutamine synthetase]-O(4)-(5'-adenylyl)-L-tyrosine + phosphate = [glutamine synthetase]-L-tyrosine + ADP. The catalysed reaction is [glutamine synthetase]-L-tyrosine + ATP = [glutamine synthetase]-O(4)-(5'-adenylyl)-L-tyrosine + diphosphate. Functionally, involved in the regulation of glutamine synthetase GlnA, a key enzyme in the process to assimilate ammonia. When cellular nitrogen levels are high, the C-terminal adenylyl transferase (AT) inactivates GlnA by covalent transfer of an adenylyl group from ATP to specific tyrosine residue of GlnA, thus reducing its activity. Conversely, when nitrogen levels are low, the N-terminal adenylyl removase (AR) activates GlnA by removing the adenylyl group by phosphorolysis, increasing its activity. The regulatory region of GlnE binds the signal transduction protein PII (GlnB) which indicates the nitrogen status of the cell. The polypeptide is Bifunctional glutamine synthetase adenylyltransferase/adenylyl-removing enzyme (Caulobacter vibrioides (strain ATCC 19089 / CIP 103742 / CB 15) (Caulobacter crescentus)).